A 186-amino-acid polypeptide reads, in one-letter code: Elongation factor P (186 aa).

It belongs to the elongation factor P family.

The protein resides in the cytoplasm. It participates in protein biosynthesis; polypeptide chain elongation. Its function is as follows. Involved in peptide bond synthesis. Stimulates efficient translation and peptide-bond synthesis on native or reconstituted 70S ribosomes in vitro. Probably functions indirectly by altering the affinity of the ribosome for aminoacyl-tRNA, thus increasing their reactivity as acceptors for peptidyl transferase. The chain is Elongation factor P from Streptococcus agalactiae serotype Ia (strain ATCC 27591 / A909 / CDC SS700).